A 1345-amino-acid polypeptide reads, in one-letter code: DNA-directed RNA polymerase subunit beta (1345 aa).

The protein belongs to the RNA polymerase beta chain family. The RNAP catalytic core consists of 2 alpha, 1 beta, 1 beta' and 1 omega subunit. When a sigma factor is associated with the core the holoenzyme is formed, which can initiate transcription.

It catalyses the reaction RNA(n) + a ribonucleoside 5'-triphosphate = RNA(n+1) + diphosphate. Its function is as follows. DNA-dependent RNA polymerase catalyzes the transcription of DNA into RNA using the four ribonucleoside triphosphates as substrates. The sequence is that of DNA-directed RNA polymerase subunit beta from Shewanella sp. (strain MR-4).